The following is a 447-amino-acid chain: Phosphoglucosamine mutase (447 aa).

Ser-108 (phosphoserine intermediate) is an active-site residue. Ser-108, Asp-247, Asp-249, and Asp-251 together coordinate Mg(2+). Ser-108 is modified (phosphoserine).

The protein belongs to the phosphohexose mutase family. The cofactor is Mg(2+). Post-translationally, activated by phosphorylation.

It carries out the reaction alpha-D-glucosamine 1-phosphate = D-glucosamine 6-phosphate. In terms of biological role, catalyzes the conversion of glucosamine-6-phosphate to glucosamine-1-phosphate. The protein is Phosphoglucosamine mutase of Bordetella petrii (strain ATCC BAA-461 / DSM 12804 / CCUG 43448).